We begin with the raw amino-acid sequence, 183 residues long: Troponin I, fast skeletal muscle (183 aa).

Ser2 bears the N-acetylserine mark. The segment at 2-48 is involved in binding TNC; sequence SDEEKKRRAATARRQHLKSAMLQLAVTEIEKEAAAKEVEKQNYLAEH. The segment at 97-117 is involved in binding TNC and actin; that stretch reads SQKLFDLRGKFKRPPLRRVRM.

Belongs to the troponin I family. In terms of assembly, binds to actin and tropomyosin. In terms of processing, the N-terminus is blocked.

Functionally, troponin I is the inhibitory subunit of troponin, the thin filament regulatory complex which confers calcium-sensitivity to striated muscle actomyosin ATPase activity. This chain is Troponin I, fast skeletal muscle (TNNI2), found in Gallus gallus (Chicken).